The sequence spans 396 residues: uncharacterized protein (396 aa).

12 helical membrane-spanning segments follow: residues 8–28 (TASG…ILAS), 44–64 (ISYV…ISGV), 73–93 (PLVV…PLSP), 97–117 (LAFV…AGTY), 133–153 (VLVK…ITFL), 158–178 (MFYG…IIYL), 213–233 (ALII…IWLP), 250–270 (LLSY…VLLN), 276–296 (VFIT…MLTV), 304–324 (ITAF…ITLM), 338–358 (IVAT…GLIA), and 363–383 (IAHI…AAAF).

It belongs to the major facilitator superfamily.

The protein resides in the cell membrane. This is an uncharacterized protein from Bacillus subtilis (strain 168).